A 608-amino-acid polypeptide reads, in one-letter code: Chaperone protein HtpG (608 aa).

The a; substrate-binding stretch occupies residues 1 to 332 (MQFQTEVNQL…VEDLPLNVSR (332 aa)). The segment at 333-536 (EILQENQILK…KNKLDFAMQQ (204 aa)) is b. The interval 537 to 608 (LLKQMGQEQN…LTKIINKAFS (72 aa)) is c.

The protein belongs to the heat shock protein 90 family. Homodimer.

It localises to the cytoplasm. Molecular chaperone. Has ATPase activity. This Campylobacter jejuni subsp. doylei (strain ATCC BAA-1458 / RM4099 / 269.97) protein is Chaperone protein HtpG.